The following is a 372-amino-acid chain: MPLPDFHVSEPFTLGIELEMQVVNPPGYDLSQDSSMLIDAVKNKITAGEVKHDITESMLELATDVCRDINQAAGQFSAMQKVVLQAATDHHLEICGGGTHPFQKWQRQEVCDNERYQRTLENFGYLIQQATVFGQHVHVGCASGDDAIYLLHGLSRFVPHFIALSAASPYMQGTDTRFASSRPNIFSAFPDNGPMPWVSNWQQFEALFRCLSYTTMIDSIKDLHWDIRPSPHFGTVEVRVMDTPLTLSHAVNMAGLIQATAHWLLTERPFKHQEKDYLLYKFNRFQACRYGLEGVITDPHTGDRRPLTEDTLRLLEKIAPSAHKIGASSAIEALHRQVVSGLNEAQLMRDFVADGGSLIGLVKKHCEIWAGD.

This sequence belongs to the glutamate--cysteine ligase type 2 family. YbdK subfamily. As to quaternary structure, homodimer.

It carries out the reaction L-cysteine + L-glutamate + ATP = gamma-L-glutamyl-L-cysteine + ADP + phosphate + H(+). In terms of biological role, ATP-dependent carboxylate-amine ligase which exhibits weak glutamate--cysteine ligase activity. The chain is Putative glutamate--cysteine ligase 2 (ybdK) from Escherichia coli (strain K12 / MC4100 / BW2952).